The sequence spans 549 residues: Indole-3-acetic acid-amido synthetase GH3.2 (549 aa).

This sequence belongs to the IAA-amido conjugating enzyme family. In terms of tissue distribution, expressed in flowers, pollen, cotyledons, stipules, true leaves, hypocotyls, and all parts of the roots except for the primary root tips.

Catalyzes the synthesis of indole-3-acetic acid (IAA)-amino acid conjugates, providing a mechanism for the plant to cope with the presence of excess auxin. Strongly reactive with Glu, Gln, Trp, Asp, Ala, Leu, Phe, Gly, Tyr, Met, Ile and Val. Little or no product formation with His, Ser, Thr, Arg, Lys, or Cys. Also active on pyruvic and butyric acid analogs of IAA, PAA and the synthetic auxin naphthaleneacetic acid (NAA). The two chlorinated synthetic auxin herbicides 2,4-D and 3,6-dichloro-o-anisic acid (dicamba) cannot be used as substrates. The chain is Indole-3-acetic acid-amido synthetase GH3.2 (GH3.2) from Arabidopsis thaliana (Mouse-ear cress).